Reading from the N-terminus, the 629-residue chain is MEPLDALEKHGDIKKVLTEKLATLPTSPGIYQFKNSAGRIIYVGKAKNLRNRVRSYFRNSHQLFGKTLVLVSHIDDLEVIITSSEVEALILENNLIKELKPRYNVNLKDDKTYPYLVITNEPYPRILFTRHRRNDGSIAFGPYTEARQLRSILDLIGSIFPVRSCKLRLTPDAIASGKYKVCLDYHIHKCKGACEGLQPEDEYRQMIDEIIKLLKGKTSALIRSLTENMHLAATELRFEQAAEIKAQIESLKRYAERQKVVAADMVDRDVFAIAAGEDDACGVIFKIREGKLLGSQRIYINNTNGESEASMQLRMLEKFYVESIEPVPDEILLQEALSEEEEETLRAFLLVKAKNEGQEKKGIRLVVPQIGDKAHLVGMCRQNARHHLEEYLIQKQKRGEAAREHFGLTALKELLHLPTLPQRIECFDNSHFQGTDYVSSMVCFEKGKTKKSDYRKFKIKTFEGSDDYAAMDEVLRRRYSGSLTESLALPDLIVVDGGKGQVNTAYKTLQELGVTIPVIGLAKRIEEIFTPHSSDPFNLPKTSPALKLLQQLRDEAHRFAITYHRKLRSDRTLQTELTTIAGIGEKTAFKLLEHFGSVESVAQASREELQAVIGAKAGETVYTFYRPEG.

In terms of domain architecture, GIY-YIG spans 26-105; it reads TSPGIYQFKN…IKELKPRYNV (80 aa). The region spanning 219–254 is the UVR domain; that stretch reads SALIRSLTENMHLAATELRFEQAAEIKAQIESLKRY.

This sequence belongs to the UvrC family. As to quaternary structure, interacts with UvrB in an incision complex.

The protein resides in the cytoplasm. Functionally, the UvrABC repair system catalyzes the recognition and processing of DNA lesions. UvrC both incises the 5' and 3' sides of the lesion. The N-terminal half is responsible for the 3' incision and the C-terminal half is responsible for the 5' incision. This chain is UvrABC system protein C, found in Chlorobium chlorochromatii (strain CaD3).